The chain runs to 760 residues: MKLNVDGLLVYFPYDYIYPEQFSYMLELKRTLDAKGHGVLEMPSGTGKTVSLLALIVAYQRAYPLEVTKLIYCSRTVPEIEKVIEELRKLLSFYEQQEGEKLPFLGLALSSRKNLCIHPEVTPLRFGKDVDGKCHSLTASYVRAQYQQDASLPHCRFYEEFDIHGRQMPLPAGIYNLDDLKALGQRQGWCPYFLARYSILHANVVVYSYHYLLDPKIADLVSKELARKAVVVFDEAHNIDNVCIDSMSVNLTRRTLDRCQSNLDTLQKTVLRIKETDEQRLRDEYRRLVEGLREASVARETDAHLANPVLPDEVLQEAVPGSIRTAEHFLGFLRRLLEYVKWRLRVQHVVQESPPAFLSGLAQRVCIQRKPLRFCAERLRSLLHTLEIADLADFSPLTLLANFATLVSTYAKGFTIIIEPFDDRTPTIANPVLHFSCMDASLAIKPVFERFQSVIITSGTLSPLDIYPKILDFHPVTMATFTMTLARVCLCPMIIGRGNDQVAISSKFETREDIAVIRNYGNLLLEMSAVVPDGIVAFFTSYQYMESTVASWYEQGILENIQRNKLLFIETQDGAETSVALEKYQEACENGRGAILLSVARGKVSEGIDFVHHYGRAVIMFGVPYVYTQSRILKARLEYLRDQFQIRENDFLTFDAMRHAAQCVGRAIRGKTDYGLMVFADKRFARADKRGKLPRWIQEHLTDSNLNLTVDEGVQVAKYFLRQMAQPFHREDQLGLSLLSLEQLQSEETLQRIEQIAQQL.

Residues 7–283 enclose the Helicase ATP-binding domain; the sequence is GLLVYFPYDY…KETDEQRLRD (277 aa). Residue 42 to 49 coordinates ATP; the sequence is MPSGTGKT. Residues Cys116, Cys134, Cys155, and Cys190 each coordinate [4Fe-4S] cluster. Residues 234-237 carry the DEAH box motif; it reads DEAH. The mediates interaction with MMS19 stretch occupies residues 438–637; the sequence is MDASLAIKPV…TQSRILKARL (200 aa).

Belongs to the helicase family. RAD3/XPD subfamily. Component of the 7-subunit TFIIH core complex composed of XPB/ERCC3, XPD/ERCC2, GTF2H1, GTF2H2, GTF2H3, GTF2H4 and GTF2H5, which is active in NER. The core complex associates with the 3-subunit CDK-activating kinase (CAK) module composed of CCNH/cyclin H, CDK7 and MNAT1 to form the 10-subunit holoenzyme (holo-TFIIH) active in transcription. The interaction with GTF2H2 results in the stimulation of the 5'--&gt;3' helicase activity. Component of the MMXD complex, which includes CIAO1, ERCC2, CIAO2B, MMS19 and SLC25A5. Interacts with CIAO1 and CIAO2B; the interaction WITH CIAO2B is direct. Interacts with ATF7IP. Interacts directly with MMS19. Part of TBP-based Pol II pre-initiation complex (PIC), in which Pol II core assembles with general transcription factors and other specific initiation factors including GTF2E1, GTF2E2, GTF2F1, GTF2F2, TCEA1, ERCC2, ERCC3, GTF2H2, GTF2H3, GTF2H4, GTF2H5, GTF2A1, GTF2A2, GTF2B and TBP; this large multi-subunit PIC complex mediates DNA unwinding and targets Pol II core to the transcription start site where the first phosphodiester bond forms. Requires Mg(2+) as cofactor. [4Fe-4S] cluster serves as cofactor. Post-translationally, ISGylated.

The protein resides in the nucleus. The protein localises to the cytoplasm. Its subcellular location is the cytoskeleton. It is found in the spindle. The enzyme catalyses Couples ATP hydrolysis with the unwinding of duplex DNA at the replication fork by translocating in the 5'-3' direction. This creates two antiparallel DNA single strands (ssDNA). The leading ssDNA polymer is the template for DNA polymerase III holoenzyme which synthesizes a continuous strand.. It carries out the reaction ATP + H2O = ADP + phosphate + H(+). In terms of biological role, ATP-dependent 5'-3' DNA helicase, component of the general transcription and DNA repair factor IIH (TFIIH) core complex, which is involved in general and transcription-coupled nucleotide excision repair (NER) of damaged DNA and, when complexed to CDK-activating kinase (CAK), involved in transcription by RNA polymerase II. In NER, TFIIH acts by opening DNA around the lesion to allow the excision of the damaged oligonucleotide and its replacement by a new DNA fragment. The ATP-dependent helicase activity of XPD/ERCC2 is required for DNA opening. In transcription, TFIIH has an essential role in transcription initiation. When the pre-initiation complex (PIC) has been established, TFIIH is required for promoter opening and promoter escape. Phosphorylation of the C-terminal tail (CTD) of the largest subunit of RNA polymerase II by the kinase module CAK controls the initiation of transcription. XPD/ERCC2 acts by forming a bridge between CAK and the core-TFIIH complex. Involved in the regulation of vitamin-D receptor activity. As part of the mitotic spindle-associated MMXD complex it plays a role in chromosome segregation. Might have a role in aging process and could play a causative role in the generation of skin cancers. The sequence is that of General transcription and DNA repair factor IIH helicase subunit XPD (Ercc2) from Mus musculus (Mouse).